Here is a 710-residue protein sequence, read N- to C-terminus: Dual specificity protein kinase shkE (710 aa).

Low complexity-rich tracts occupy residues 83-94 (DVSDSNNNNSTS), 107-129 (NNNN…NNNN), and 197-208 (QKQQQSQASIQQ). 2 disordered regions span residues 83–136 (DVSD…PTVI) and 189–232 (QHLT…IPPE). The Protein kinase domain maps to 237–495 (DVKTDLLGGG…EVTQRMNEVL (259 aa)). ATP is bound by residues 243 to 251 (LGGGAYGKV) and Lys264. Asp359 serves as the catalytic Proton acceptor. The SH2 domain occupies 597–707 (WFHFDISRDI…CPITEIKVPY (111 aa)).

It belongs to the protein kinase superfamily. Ser/Thr protein kinase family. SH2 domain-containing protein kinase subfamily.

The protein localises to the membrane. The catalysed reaction is L-seryl-[protein] + ATP = O-phospho-L-seryl-[protein] + ADP + H(+). The enzyme catalyses L-threonyl-[protein] + ATP = O-phospho-L-threonyl-[protein] + ADP + H(+). Functionally, required for proper chemotaxis and phagocytosis; proper spatiotemporal control of F-actin levels in chemotaxing cells. Negative regulator of the PI3K (phosphatidylinositol 3 kinase) pathway. Predominantly phosphorylates serines and threonines and tyrosines at a lower level. The polypeptide is Dual specificity protein kinase shkE (shkE) (Dictyostelium discoideum (Social amoeba)).